The primary structure comprises 481 residues: Cys-Gly metallodipeptidase DUG1 (481 aa).

Histidine 102 serves as a coordination point for Zn(2+). Aspartate 104 is a catalytic residue. Residue aspartate 137 participates in Zn(2+) binding. Glutamate 171 (proton acceptor) is an active-site residue. Residues glutamate 172, aspartate 200, and histidine 450 each coordinate Zn(2+). At serine 451 the chain carries Phosphoserine.

Belongs to the peptidase M20A family. As to quaternary structure, homodimer. Component of the GSH degradosomal complex composed of at least DUG1, DUG2 and DUG3. Zn(2+) is required as a cofactor. Mn(2+) serves as cofactor.

Its subcellular location is the cytoplasm. The protein resides in the mitochondrion. Functionally, catalytic component of the GSH degradosomal complex involved in the degradation of glutathione (GSH) and other peptides containing a gamma-glu-X bond. Also functions in a DUG2-DUG3-independent manner as a dipeptidase with high specificity for Cys-Gly and no activity toward tri- or tetrapeptides. This chain is Cys-Gly metallodipeptidase DUG1 (DUG1), found in Saccharomyces cerevisiae (strain ATCC 204508 / S288c) (Baker's yeast).